The chain runs to 446 residues: Sensor-type histidine kinase PrrB (446 aa).

The next 2 helical transmembrane spans lie at Val19–Val39 and Leu151–Phe171. Residues Ala172 to Asn222 enclose the HAMP domain. Positions Val237 to Ser446 constitute a Histidine kinase domain. Phosphohistidine; by autocatalysis is present on His240.

Post-translationally, autophosphorylated.

The protein localises to the cell membrane. It carries out the reaction ATP + protein L-histidine = ADP + protein N-phospho-L-histidine.. Its function is as follows. Member of the two-component regulatory system PrrB/PrrA that is involved specifically in early intracellular multiplication of Mycobacterium and is essential for its viability. Functions as a sensor protein kinase which is autophosphorylated at a histidine residue and transfers its phosphate group to the conserved aspartic acid residue in the regulatory domain of PrrA. In turn, PrrA binds to the upstream promoter regions of target genes including itself to positively regulate their expression. This is Sensor-type histidine kinase PrrB (prrB) from Mycobacterium leprae (strain TN).